The sequence spans 146 residues: 3-hydroxyacyl-[acyl-carrier-protein] dehydratase FabZ (146 aa).

The active site involves His47.

This sequence belongs to the thioester dehydratase family. FabZ subfamily.

It is found in the cytoplasm. It carries out the reaction a (3R)-hydroxyacyl-[ACP] = a (2E)-enoyl-[ACP] + H2O. In terms of biological role, involved in unsaturated fatty acids biosynthesis. Catalyzes the dehydration of short chain beta-hydroxyacyl-ACPs and long chain saturated and unsaturated beta-hydroxyacyl-ACPs. This is 3-hydroxyacyl-[acyl-carrier-protein] dehydratase FabZ from Methylococcus capsulatus (strain ATCC 33009 / NCIMB 11132 / Bath).